The primary structure comprises 553 residues: Cytochrome P450 86A2 (553 aa).

The helical transmembrane segment at 2 to 20 (DVSNTMLLVAVVAAYWLWF) threads the bilayer. Cys459 lines the heme pocket.

This sequence belongs to the cytochrome P450 family. Heme serves as cofactor. In terms of tissue distribution, expressed in leaves, stems, flowers and siliques. Expressed at low levels in roots. Expressed in guard cells of cotyledons and leaves.

It is found in the membrane. The catalysed reaction is an organic molecule + reduced [NADPH--hemoprotein reductase] + O2 = an alcohol + oxidized [NADPH--hemoprotein reductase] + H2O + H(+). Its function is as follows. Catalyzes the omega-hydroxylation of various fatty acids (FA). Acts on saturated and unsaturated fatty acids with chain lengths from C12 to C18. Plays a major role in the biosynthesis of extracellular lipids. Involved in the biosynthesis of hydroxylated fatty acids required for cutin biosynthesis, cuticle development and repression of bacterial type III gene expression. The polypeptide is Cytochrome P450 86A2 (CYP86A2) (Arabidopsis thaliana (Mouse-ear cress)).